The chain runs to 372 residues: MLVAVVKELKQGEGRVACTPENVRKLTDAGHKVIVEKNAGIGSGFSNDMYEKEGAKIVTHEQAWEADLVIKVKEPHESEYQYFKKNQIIWGFLHLASSKEIVEKMQEVGVTAISGETIIKNGKAELLAPMSAIAGQRSAIMGAYYSEAQHGGQGTLVTGVHENVDIPGSTYVIFGGGVAATNAANVALGLNAKVIIIELNDDRIKYLQDMYAEKDVTVVKSTPENLAEQIKKADVFISTILIPGAKPPKLVTREMVKSMKKGSVLIDIAIDQGGTIETIRPTTISDPVYEEEGVIHYGVPNQPGAVPRTSTMALAQGNIDYILEICDKGLEQAIKDNEALSTGVNIYQGQVTNQGLASSHDLDYKEILNVIE.

Residue histidine 94 is part of the active site. 170 to 200 (TYVIFGGGVAATNAANVALGLNAKVIIIELN) serves as a coordination point for NAD(+).

The protein belongs to the AlaDH/PNT family.

The catalysed reaction is L-alanine + NAD(+) + H2O = pyruvate + NH4(+) + NADH + H(+). It functions in the pathway amino-acid degradation; L-alanine degradation via dehydrogenase pathway; NH(3) and pyruvate from L-alanine: step 1/1. Functionally, may play a role in cell wall synthesis as L-alanine is an important constituent of the peptidoglycan layer. This is Alanine dehydrogenase 1 (ald1) from Staphylococcus aureus (strain MSSA476).